The chain runs to 560 residues: Membrane protein insertase YidC (560 aa).

A helical membrane pass occupies residues 1–21 (MDIKRTILIAALAIVSYVMVL). The disordered stretch occupies residues 42-66 (VAPGLPDGVPAANNGASADVPSANA). The next 5 helical transmembrane spans lie at 341–361 (LELT…FWLL), 367–387 (LLGN…GLFF), 437–457 (LGGC…YWVL), 468–488 (WMLW…PIIM), and 515–535 (PIIF…YWVV).

The protein belongs to the OXA1/ALB3/YidC family. Type 1 subfamily. In terms of assembly, interacts with the Sec translocase complex via SecD. Specifically interacts with transmembrane segments of nascent integral membrane proteins during membrane integration.

It localises to the cell inner membrane. Required for the insertion and/or proper folding and/or complex formation of integral membrane proteins into the membrane. Involved in integration of membrane proteins that insert both dependently and independently of the Sec translocase complex, as well as at least some lipoproteins. Aids folding of multispanning membrane proteins. The sequence is that of Membrane protein insertase YidC from Pseudomonas putida (strain W619).